A 243-amino-acid chain; its full sequence is Probable transcriptional regulatory protein PTH_1024 (243 aa).

This sequence belongs to the TACO1 family.

Its subcellular location is the cytoplasm. This chain is Probable transcriptional regulatory protein PTH_1024, found in Pelotomaculum thermopropionicum (strain DSM 13744 / JCM 10971 / SI).